A 319-amino-acid chain; its full sequence is Urease accessory protein UreD (319 aa).

Residues Q298–H319 form a disordered region.

Belongs to the UreD family. UreD, UreF and UreG form a complex that acts as a GTP-hydrolysis-dependent molecular chaperone, activating the urease apoprotein by helping to assemble the nickel containing metallocenter of UreC. The UreE protein probably delivers the nickel.

The protein localises to the cytoplasm. In terms of biological role, required for maturation of urease via the functional incorporation of the urease nickel metallocenter. This chain is Urease accessory protein UreD, found in Synechococcus sp. (strain WH7805).